Reading from the N-terminus, the 250-residue chain is GILT-like protein 1 (250 aa).

The first 21 residues, 1–21 (MSHKIAAVCLLMSCLIATAYS), serve as a signal peptide directing secretion. A glycan (N-linked (GlcNAc...) asparagine) is linked at N157.

It belongs to the GILT family. Conjugated to URM1, a ubiquitin-like protein.

Its subcellular location is the secreted. Its function is as follows. Involved in the immune response to bacterial infection. The polypeptide is GILT-like protein 1 (Drosophila melanogaster (Fruit fly)).